Consider the following 575-residue polypeptide: Probable lysosomal cobalamin transporter (575 aa).

Transmembrane regions (helical) follow at residues 8–28 (LIWV…SVFI), 46–66 (IVAI…VALV), 95–115 (LVYY…VPFV), 144–164 (YTLS…FVPI), and 188–208 (ALTF…ALHT). Asparagine 233 is a glycosylation site (N-linked (GlcNAc...) asparagine). 4 consecutive transmembrane segments (helical) span residues 314–334 (LVGL…ILTA), 376–396 (AIFT…IATV), 420–440 (VMTA…SMIV), and 504–524 (FGAI…LALI). The span at 537 to 549 (QLDEDAEEAEEEA) shows a compositional bias: acidic residues. The segment at 537-556 (QLDEDAEEAEEEALLSGSRR) is disordered.

The protein belongs to the LIMR family. LMBRD1 subfamily.

The protein resides in the lysosome membrane. Functionally, probable lysosomal cobalamin transporter. Required to export cobalamin from lysosomes allowing its conversion to cofactors. The protein is Probable lysosomal cobalamin transporter of Emericella nidulans (strain FGSC A4 / ATCC 38163 / CBS 112.46 / NRRL 194 / M139) (Aspergillus nidulans).